The chain runs to 129 residues: Serum amyloid A-2 protein (129 aa).

The first 18 residues, 1 to 18 (MKLFTGLIFCSLVLGVHS), serve as a signal peptide directing secretion. Residue Gln19 is modified to Pyrrolidone carboxylic acid. Positions 90–103 (KHGDSGHGVEDSRA) are enriched in basic and acidic residues. Residues 90–129 (KHGDSGHGVEDSRADQAANEWGRSGKDPNHFRPPGLPDKY) are disordered.

The protein belongs to the SAA family. As to quaternary structure, apolipoprotein of the HDL complex.

It is found in the secreted. Its function is as follows. Major acute phase reactant. This is Serum amyloid A-2 protein from Sus scrofa (Pig).